The sequence spans 164 residues: Ribosome-binding factor A (164 aa).

Belongs to the RbfA family. As to quaternary structure, monomer. Binds 30S ribosomal subunits, but not 50S ribosomal subunits or 70S ribosomes.

Its subcellular location is the cytoplasm. Its function is as follows. One of several proteins that assist in the late maturation steps of the functional core of the 30S ribosomal subunit. Associates with free 30S ribosomal subunits (but not with 30S subunits that are part of 70S ribosomes or polysomes). Required for efficient processing of 16S rRNA. May interact with the 5'-terminal helix region of 16S rRNA. This Mycobacterium leprae (strain Br4923) protein is Ribosome-binding factor A.